The primary structure comprises 395 residues: Levanbiose-producing levanase (395 aa).

Residue D1 is part of the active site. Residues W59–T60, R124–D125, E173, and W261 contribute to the substrate site.

The protein belongs to the glycosyl hydrolase 32 family.

The protein resides in the membrane. It catalyses the reaction Hydrolysis of (2-&gt;6)-beta-D-fructofuranan, to remove successive disaccharide residues as levanbiose, i.e. 6-(beta-D-fructofuranosyl)-D-fructose, from the end of the chain.. Its function is as follows. Catalyzes the degradation of levan mainly into levanbiose (difructose). Can also hydrolyze inulin. In Geobacillus stearothermophilus (Bacillus stearothermophilus), this protein is Levanbiose-producing levanase (levB).